The chain runs to 282 residues: Bis(5'-nucleosyl)-tetraphosphatase, symmetrical (282 aa).

It belongs to the Ap4A hydrolase family.

It catalyses the reaction P(1),P(4)-bis(5'-adenosyl) tetraphosphate + H2O = 2 ADP + 2 H(+). Its function is as follows. Hydrolyzes diadenosine 5',5'''-P1,P4-tetraphosphate to yield ADP. This is Bis(5'-nucleosyl)-tetraphosphatase, symmetrical from Escherichia fergusonii (strain ATCC 35469 / DSM 13698 / CCUG 18766 / IAM 14443 / JCM 21226 / LMG 7866 / NBRC 102419 / NCTC 12128 / CDC 0568-73).